A 271-amino-acid chain; its full sequence is ABC transporter I family member 10 (271 aa).

Positions 40–267 (VECRNLCFSV…IKAKQSSYID (228 aa)) constitute an ABC transporter domain. 77 to 84 (GPNGCGKS) provides a ligand contact to ATP.

It belongs to the ABC transporter superfamily. ABCI family.

This Arabidopsis thaliana (Mouse-ear cress) protein is ABC transporter I family member 10 (ABCI10).